Consider the following 268-residue polypeptide: NH(3)-dependent NAD(+) synthetase (268 aa).

45-52 (GLSGGIDS) provides a ligand contact to ATP. Aspartate 51 lines the Mg(2+) pocket. A deamido-NAD(+)-binding site is contributed by arginine 129. Residue threonine 149 coordinates ATP. Glutamate 154 contributes to the Mg(2+) binding site. Lysine 162 and aspartate 169 together coordinate deamido-NAD(+). ATP contacts are provided by lysine 178 and threonine 200. Residue 260-261 (HK) participates in deamido-NAD(+) binding.

It belongs to the NAD synthetase family. In terms of assembly, homodimer.

The catalysed reaction is deamido-NAD(+) + NH4(+) + ATP = AMP + diphosphate + NAD(+) + H(+). Its pathway is cofactor biosynthesis; NAD(+) biosynthesis; NAD(+) from deamido-NAD(+) (ammonia route): step 1/1. In terms of biological role, catalyzes the ATP-dependent amidation of deamido-NAD to form NAD. Uses ammonia as a nitrogen source. The polypeptide is NH(3)-dependent NAD(+) synthetase (Halobacterium salinarum (strain ATCC 29341 / DSM 671 / R1)).